The following is a 262-amino-acid chain: 4-hydroxy-2-oxo-heptane-1,7-dioate aldolase (262 aa).

His45 serves as the catalytic Proton acceptor. Gln147 lines the substrate pocket. Glu149 contacts a divalent metal cation. Residues Ala174 and Asp175 each contribute to the substrate site. An a divalent metal cation-binding site is contributed by Asp175.

The protein belongs to the HpcH/HpaI aldolase family. Homohexamer; trimer of dimers. A divalent metal cation is required as a cofactor.

The catalysed reaction is 4-hydroxy-2-oxoheptanedioate = succinate semialdehyde + pyruvate. The protein operates within aromatic compound metabolism; 4-hydroxyphenylacetate degradation; pyruvate and succinate semialdehyde from 4-hydroxyphenylacetate: step 7/7. In terms of biological role, catalyzes the reversible retro-aldol cleavage of 4-hydroxy-2-ketoheptane-1,7-dioate (HKHD) to pyruvate and succinic semialdehyde. The chain is 4-hydroxy-2-oxo-heptane-1,7-dioate aldolase from Shigella boydii serotype 18 (strain CDC 3083-94 / BS512).